We begin with the raw amino-acid sequence, 263 residues long: S-methyl-5'-thioadenosine phosphorylase (263 aa).

Residues Thr-13, 55 to 56, and 88 to 89 contribute to the phosphate site; these read RH and SA. Met-186 is a substrate binding site. Thr-187 lines the phosphate pocket. 210–212 lines the substrate pocket; the sequence is DYD.

It belongs to the PNP/MTAP phosphorylase family. MTAP subfamily. Homohexamer. Dimer of a homotrimer.

The enzyme catalyses S-methyl-5'-thioadenosine + phosphate = 5-(methylsulfanyl)-alpha-D-ribose 1-phosphate + adenine. It functions in the pathway amino-acid biosynthesis; L-methionine biosynthesis via salvage pathway; S-methyl-5-thio-alpha-D-ribose 1-phosphate from S-methyl-5'-thioadenosine (phosphorylase route): step 1/1. Functionally, catalyzes the reversible phosphorylation of S-methyl-5'-thioadenosine (MTA) to adenine and 5-methylthioribose-1-phosphate. Involved in the breakdown of MTA, a major by-product of polyamine biosynthesis. Responsible for the first step in the methionine salvage pathway after MTA has been generated from S-adenosylmethionine. Has broad substrate specificity with 6-aminopurine nucleosides as preferred substrates. This Nitrosopumilus maritimus (strain SCM1) protein is S-methyl-5'-thioadenosine phosphorylase.